Consider the following 240-residue polypeptide: FAS1 domain-containing protein AN1527 (240 aa).

An N-terminal signal peptide occupies residues 1–24 (MRQLSTTALVLFLFFYCSISTAWS). Residues 91–239 (EPTISDVLPK…GEVWVIDGVI (149 aa)) enclose the FAS1 domain.

The protein localises to the vacuole. The protein is FAS1 domain-containing protein AN1527 of Emericella nidulans (strain FGSC A4 / ATCC 38163 / CBS 112.46 / NRRL 194 / M139) (Aspergillus nidulans).